A 634-amino-acid polypeptide reads, in one-letter code: Probable potassium transport system protein Kup (634 aa).

The next 12 helical transmembrane spans lie at 19 to 39, 62 to 82, 113 to 133, 150 to 170, 177 to 197, 225 to 245, 259 to 279, 291 to 311, 349 to 369, 379 to 399, 406 to 426, and 431 to 451; these read AIGL…TSPL, VLSL…VIFV, FVVV…MITP, GLEH…FLIQ, IGIL…ALGV, IGVA…ALYA, WFLL…ATIL, LLAP…ATVI, IYIG…VLGF, YGVA…VVIW, LWLG…FFAA, and VIQG…LMST.

It belongs to the HAK/KUP transporter (TC 2.A.72) family.

The protein localises to the cell inner membrane. It catalyses the reaction K(+)(in) + H(+)(in) = K(+)(out) + H(+)(out). Transport of potassium into the cell. Likely operates as a K(+):H(+) symporter. This Pseudomonas aeruginosa (strain UCBPP-PA14) protein is Probable potassium transport system protein Kup.